The primary structure comprises 179 residues: Adenine phosphoribosyltransferase (179 aa).

It belongs to the purine/pyrimidine phosphoribosyltransferase family. Homodimer.

It is found in the cytoplasm. It catalyses the reaction AMP + diphosphate = 5-phospho-alpha-D-ribose 1-diphosphate + adenine. Its pathway is purine metabolism; AMP biosynthesis via salvage pathway; AMP from adenine: step 1/1. Its function is as follows. Catalyzes a salvage reaction resulting in the formation of AMP, that is energically less costly than de novo synthesis. This chain is Adenine phosphoribosyltransferase, found in Jannaschia sp. (strain CCS1).